A 138-amino-acid polypeptide reads, in one-letter code: U1 small nuclear ribonucleoprotein C (138 aa).

The Matrin-type zinc finger occupies 4–36 (YYCDYCDTFLTHDSPSVRKTHNNGRKHKENVRF). The tract at residues 58–138 (QSKPNSQMPP…MGRPPMSLRS (81 aa)) is disordered. The segment covering 67–109 (PNAPPGLMPPPGMLPPPGGMPPGRMPPQGLPFPPPGPIPPPPG) has biased composition (pro residues). Residues 113-138 (MRPPHGQMHMGGPRPQMGRPPMSLRS) are compositionally biased toward low complexity.

This sequence belongs to the U1 small nuclear ribonucleoprotein C family. In terms of assembly, U1 snRNP is composed of the 7 core Sm proteins B/B', D1, D2, D3, E, F and G that assemble in a heptameric protein ring on the Sm site of the small nuclear RNA to form the core snRNP, and at least 3 U1 snRNP-specific proteins U1-70K, U1-A and U1-C. U1-C interacts with U1 snRNA and the 5' splice-site region of the pre-mRNA.

The protein localises to the nucleus. Its function is as follows. Component of the spliceosomal U1 snRNP, which is essential for recognition of the pre-mRNA 5' splice-site and the subsequent assembly of the spliceosome. U1-C is directly involved in initial 5' splice-site recognition for both constitutive and regulated alternative splicing. The interaction with the 5' splice-site seems to precede base-pairing between the pre-mRNA and the U1 snRNA. Stimulates commitment or early (E) complex formation by stabilizing the base pairing of the 5' end of the U1 snRNA and the 5' splice-site region. The protein is U1 small nuclear ribonucleoprotein C of Nematostella vectensis (Starlet sea anemone).